A 347-amino-acid polypeptide reads, in one-letter code: GMP reductase (347 aa).

Residue 108–131 (ADFQKTKDIMALTDDLIFICIDIA) participates in NADP(+) binding. 2 residues coordinate K(+): Gly-181 and Gly-183. Cys-186 functions as the Thioimidate intermediate in the catalytic mechanism. NADP(+) is bound at residue 216-239 (IIGDGGCSCAGDVSKAFGGGADFV).

It belongs to the IMPDH/GMPR family. GuaC type 1 subfamily. Homotetramer.

It catalyses the reaction IMP + NH4(+) + NADP(+) = GMP + NADPH + 2 H(+). Catalyzes the irreversible NADPH-dependent deamination of GMP to IMP. It functions in the conversion of nucleobase, nucleoside and nucleotide derivatives of G to A nucleotides, and in maintaining the intracellular balance of A and G nucleotides. The chain is GMP reductase from Aliivibrio fischeri (strain MJ11) (Vibrio fischeri).